The chain runs to 151 residues: Ubiquitin-conjugating enzyme E2 2 (151 aa).

Residues 4 to 150 (AARRRLMRDF…VRETVEKSWE (147 aa)) enclose the UBC core domain. The active-site Glycyl thioester intermediate is the Cys88.

Belongs to the ubiquitin-conjugating enzyme family.

Its subcellular location is the cytoplasm. The protein localises to the nucleus. It catalyses the reaction S-ubiquitinyl-[E1 ubiquitin-activating enzyme]-L-cysteine + [E2 ubiquitin-conjugating enzyme]-L-cysteine = [E1 ubiquitin-activating enzyme]-L-cysteine + S-ubiquitinyl-[E2 ubiquitin-conjugating enzyme]-L-cysteine.. It participates in protein modification; protein ubiquitination. Functionally, catalyzes the covalent attachment of ubiquitin to other proteins. Plays a role in transcription regulation by catalyzing the monoubiquitination of histone H2B to form H2BK123ub1. H2BK123ub1 gives a specific tag for epigenetic transcriptional activation and is also a prerequisite for H3K4me and H3K79me formation. Also involved in postreplication repair of UV-damaged DNA, in N-end rule-dependent protein degradation and in sporulation. The protein is Ubiquitin-conjugating enzyme E2 2 (mus-8) of Neurospora crassa (strain ATCC 24698 / 74-OR23-1A / CBS 708.71 / DSM 1257 / FGSC 987).